The sequence spans 690 residues: Glycine--tRNA ligase beta subunit (690 aa).

The protein belongs to the class-II aminoacyl-tRNA synthetase family. Tetramer of two alpha and two beta subunits.

Its subcellular location is the cytoplasm. The enzyme catalyses tRNA(Gly) + glycine + ATP = glycyl-tRNA(Gly) + AMP + diphosphate. The chain is Glycine--tRNA ligase beta subunit from Desulfitobacterium hafniense (strain Y51).